A 317-amino-acid chain; its full sequence is Egg-laying defective protein 26 (317 aa).

Residues 156–277 (EVNVSGVKFY…CSTGVPFSYD (122 aa)) form the LRAT domain. Active-site residues include histidine 166 and histidine 178. The Acyl-thioester intermediate role is filled by cysteine 261.

As to expression, highly expressed in the cells of the spermatheca, the mouth, and the lining of the pharynx, the rectum, and the excretory canal. Also expressed in the pharyngeal intestinal junction cell.

It localises to the apical cell membrane. In terms of biological role, putative acyltransferase. Plays a role in the morphogenesis of a vulval toroid cell, vulF, which is located where the vulva and the uterus connect. Not required for specifying vulval cell fate. This is Egg-laying defective protein 26 from Caenorhabditis elegans.